Consider the following 359-residue polypeptide: Aromatic amino acid aminotransferase (359 aa).

Residues 1–42 (MSERKPPYLRSALDSIPPYRPGRKVVGPDGRSAKLSSNESPF) form a disordered region. Position 223 is an N6-(pyridoxal phosphate)lysine (Lys-223).

This sequence belongs to the class-II pyridoxal-phosphate-dependent aminotransferase family. Homodimer. It depends on pyridoxal 5'-phosphate as a cofactor.

The enzyme catalyses an aromatic L-alpha-amino acid + 2-oxoglutarate = an aromatic oxo-acid + L-glutamate. Its function is as follows. Aminotransferase that catalyzes the conversion of aromatic amino acids and 2-oxoglutarate into corresponding aromatic oxo acids and L-glutamate. This Thermobifida fusca (strain YX) protein is Aromatic amino acid aminotransferase.